The primary structure comprises 407 residues: Protein arginine N-methyltransferase 2 (407 aa).

Residues 186 to 407 form the RMT2 domain; sequence TAADQATYLK…YYYHPEIRFA (222 aa). S-adenosyl-L-methionine is bound by residues Y193, M223, 246–251, 267–269, 294–295, and D315; these read FGMGII, EAH, and WQ.

The protein belongs to the class I-like SAM-binding methyltransferase superfamily. RMT2 methyltransferase family. Monomer.

The protein resides in the cytoplasm. The protein localises to the nucleus. In terms of biological role, S-adenosyl-L-methionine-dependent protein-arginine N-methyltransferase that methylates the delta-nitrogen atom of arginine residues to form N5-methylarginine (type IV) in target proteins. Monomethylates ribosomal protein L12. This Kluyveromyces lactis (strain ATCC 8585 / CBS 2359 / DSM 70799 / NBRC 1267 / NRRL Y-1140 / WM37) (Yeast) protein is Protein arginine N-methyltransferase 2.